A 266-amino-acid chain; its full sequence is Tryptophan synthase alpha chain (266 aa).

Catalysis depends on proton acceptor residues glutamate 51 and aspartate 62.

Belongs to the TrpA family. In terms of assembly, tetramer of two alpha and two beta chains.

It carries out the reaction (1S,2R)-1-C-(indol-3-yl)glycerol 3-phosphate + L-serine = D-glyceraldehyde 3-phosphate + L-tryptophan + H2O. It participates in amino-acid biosynthesis; L-tryptophan biosynthesis; L-tryptophan from chorismate: step 5/5. Functionally, the alpha subunit is responsible for the aldol cleavage of indoleglycerol phosphate to indole and glyceraldehyde 3-phosphate. The chain is Tryptophan synthase alpha chain from Thermosynechococcus vestitus (strain NIES-2133 / IAM M-273 / BP-1).